The sequence spans 240 residues: Guanine nucleotide exchange factor sopE2 (240 aa).

The segment at 78–240 is GEF catalytic domain; that stretch reads LTSKTVKDFM…IANKYLQNAS (163 aa).

This sequence belongs to the GEF (guanine exchange factor) SopE family.

The protein resides in the secreted. In terms of biological role, activator for CDC42 by directly engaging this Rho GTPase and acting as potent guanine nucleotide exchange factor (GEF). This activation results in actin cytoskeleton rearrangements and stimulates membrane ruffling, promoting bacterial entry into non-phagocytic cells. Also activates NF-kB, p38 and ERK kinases, which are known to be involved in the induction of IL-8 expression. Chaperone InvB is required for secretion, translocation and stabilization of intracellular levels of sopE2. The sequence is that of Guanine nucleotide exchange factor sopE2 (sopE2) from Salmonella typhimurium (strain LT2 / SGSC1412 / ATCC 700720).